Consider the following 202-residue polypeptide: Holliday junction branch migration complex subunit RuvA (202 aa).

The domain I stretch occupies residues 1–64; the sequence is MIGRLRGTLA…EDAQLLYGFA (64 aa). The segment at 65-143 is domain II; it reads SKRERDFFRE…AWEAVPSMFA (79 aa). The interval 144 to 154 is flexible linker; sequence LVPNQPDAPAP. The tract at residues 154–202 is domain III; that stretch reads PVASAESDAVSALISLGYKPQEASKAVSAIKDKGLSSEDMIRRALKGMI.

This sequence belongs to the RuvA family. As to quaternary structure, homotetramer. Forms an RuvA(8)-RuvB(12)-Holliday junction (HJ) complex. HJ DNA is sandwiched between 2 RuvA tetramers; dsDNA enters through RuvA and exits via RuvB. An RuvB hexamer assembles on each DNA strand where it exits the tetramer. Each RuvB hexamer is contacted by two RuvA subunits (via domain III) on 2 adjacent RuvB subunits; this complex drives branch migration. In the full resolvosome a probable DNA-RuvA(4)-RuvB(12)-RuvC(2) complex forms which resolves the HJ.

It is found in the cytoplasm. Functionally, the RuvA-RuvB-RuvC complex processes Holliday junction (HJ) DNA during genetic recombination and DNA repair, while the RuvA-RuvB complex plays an important role in the rescue of blocked DNA replication forks via replication fork reversal (RFR). RuvA specifically binds to HJ cruciform DNA, conferring on it an open structure. The RuvB hexamer acts as an ATP-dependent pump, pulling dsDNA into and through the RuvAB complex. HJ branch migration allows RuvC to scan DNA until it finds its consensus sequence, where it cleaves and resolves the cruciform DNA. This chain is Holliday junction branch migration complex subunit RuvA, found in Pseudomonas fluorescens (strain ATCC BAA-477 / NRRL B-23932 / Pf-5).